Consider the following 287-residue polypeptide: RxLR effector protein Avr4 (287 aa).

A signal peptide spans Met1–Ala24. The RxLR-dEER motif lies at Arg42–Arg55. The tract at residues Lys115–Arg138 is W1 motif. The W2 motif stretch occupies residues Gln148–Phe171. Residues Leu221–Lys244 are W3 motif. The segment at Ala246–Asp267 is y motif.

It belongs to the RxLR effector family.

Its subcellular location is the secreted. The protein localises to the host cytoplasm. It localises to the host nucleus. The protein resides in the host nucleolus. It is found in the host cytoskeleton. In terms of biological role, secreted effector that acts as an elicitor of hypersensitive response (HR) specifically on plants carrying defense protein R4, through its interaction with this protein. This is RxLR effector protein Avr4 from Phytophthora infestans (strain T30-4) (Potato late blight agent).